We begin with the raw amino-acid sequence, 229 residues long: Large ribosomal subunit protein uL1 (229 aa).

The protein belongs to the universal ribosomal protein uL1 family. As to quaternary structure, part of the 50S ribosomal subunit.

Functionally, binds directly to 23S rRNA. The L1 stalk is quite mobile in the ribosome, and is involved in E site tRNA release. Its function is as follows. Protein L1 is also a translational repressor protein, it controls the translation of the L11 operon by binding to its mRNA. The chain is Large ribosomal subunit protein uL1 from Streptococcus sanguinis (strain SK36).